The sequence spans 608 residues: Granule-bound starch synthase 1, chloroplastic/amyloplastic (608 aa).

The transit peptide at 1 to 78 (MATVIAAHFV…NGRPAAKIIC (78 aa)) directs the protein to the chloroplast. An ADP-alpha-D-glucose-binding site is contributed by K96. The disordered stretch occupies residues 587 to 608 (GSEPGTEGEEIAPLAKENVPTP).

This sequence belongs to the glycosyltransferase 1 family. Bacterial/plant glycogen synthase subfamily. As to expression, synthesized in a number of different organs, but most abundantly in tubers.

The protein localises to the plastid. It is found in the chloroplast. It localises to the amyloplast. It catalyses the reaction an NDP-alpha-D-glucose + [(1-&gt;4)-alpha-D-glucosyl](n) = [(1-&gt;4)-alpha-D-glucosyl](n+1) + a ribonucleoside 5'-diphosphate + H(+). It functions in the pathway glycan biosynthesis; starch biosynthesis. In terms of biological role, responsible for the synthesis of amylose in reserve starch. In Manihot esculenta (Cassava), this protein is Granule-bound starch synthase 1, chloroplastic/amyloplastic (WAXY).